We begin with the raw amino-acid sequence, 413 residues long: Phosphopentomutase (413 aa).

6 residues coordinate Mn(2+): Asp-11, Asp-306, His-311, Asp-347, His-348, and His-359.

This sequence belongs to the phosphopentomutase family. Mn(2+) is required as a cofactor.

Its subcellular location is the cytoplasm. It catalyses the reaction 2-deoxy-alpha-D-ribose 1-phosphate = 2-deoxy-D-ribose 5-phosphate. The enzyme catalyses alpha-D-ribose 1-phosphate = D-ribose 5-phosphate. It participates in carbohydrate degradation; 2-deoxy-D-ribose 1-phosphate degradation; D-glyceraldehyde 3-phosphate and acetaldehyde from 2-deoxy-alpha-D-ribose 1-phosphate: step 1/2. In terms of biological role, isomerase that catalyzes the conversion of deoxy-ribose 1-phosphate (dRib-1-P) and ribose 1-phosphate (Rib-1-P) to deoxy-ribose 5-phosphate (dRib-5-P) and ribose 5-phosphate (Rib-5-P), respectively. This Helicobacter acinonychis (strain Sheeba) protein is Phosphopentomutase.